A 363-amino-acid polypeptide reads, in one-letter code: Cyanide hydratase (363 aa).

Positions 6–285 (YKAACVTSEP…DGLLFVDIDL (280 aa)) constitute a CN hydrolase domain. Glu-46 (proton acceptor) is an active-site residue. Lys-128 is an active-site residue. Cys-163 serves as the catalytic Nucleophile.

It belongs to the carbon-nitrogen hydrolase superfamily. Nitrilase family. As to quaternary structure, oligomer of dimers, forming left-handed helical fibers.

The enzyme catalyses formamide = hydrogen cyanide + H2O. Catalyzes the hydration of cyanide to formamide. Degradation of cyanide may be important for plant pathogenic fungi in infection of cyanogenic plants. In Alternaria brassicicola (Dark leaf spot agent), this protein is Cyanide hydratase (CyhAB).